The sequence spans 203 residues: SOSS complex subunit B1-A (203 aa).

The segment at residues 22-92 (IVLETGRVTK…TLYTGRGGDL (71 aa)) is a DNA-binding region (OB). Residues 110 to 203 (EPNPEYIAQQ…GKESRRTGKR (94 aa)) are disordered. The span at 118–140 (QQSQSKQGQQESGTGTNNHNSSS) shows a compositional bias: low complexity. Polar residues predominate over residues 149–182 (ENGNGSNSSGPPAHQSTAPAHSASGRITRSQPNH).

It belongs to the SOSS-B family. SOSS-B1 subfamily. In terms of assembly, component of the SOSS complex, composed of soss-b (soss-b1/nabp2 or soss-b2/nabp1), soss-a/ints3 and soss-c/inip. SOSS complexes containing soss-b1/nabp2 are more abundant than complexes containing soss-b2/nabp1.

The protein resides in the nucleus. Functionally, component of the SOSS complex, a multiprotein complex that functions downstream of the MRN complex to promote DNA repair and G2/M checkpoint. In the SOSS complex, acts as a sensor of single-stranded DNA that binds to single-stranded DNA. The SOSS complex associates with DNA lesions and influences diverse endpoints in the cellular DNA damage response including cell-cycle checkpoint activation, recombinational repair and maintenance of genomic stability. Required for efficient homologous recombination-dependent repair of double-strand breaks (DSBs). In Xenopus laevis (African clawed frog), this protein is SOSS complex subunit B1-A (nabp2-a).